A 525-amino-acid chain; its full sequence is GMP synthase [glutamine-hydrolyzing] (525 aa).

The 199-residue stretch at 9–207 folds into the Glutamine amidotransferase type-1 domain; sequence RILILDFGSQ…VLDICQCEKL (199 aa). Catalysis depends on C86, which acts as the Nucleophile. Active-site residues include H181 and E183. The 193-residue stretch at 208-400 folds into the GMPS ATP-PPase domain; that stretch reads WTPDAIIEDA…LGLPYDMLYR (193 aa). 235 to 241 lines the ATP pocket; it reads SGGVDSS.

In terms of assembly, homodimer.

It carries out the reaction XMP + L-glutamine + ATP + H2O = GMP + L-glutamate + AMP + diphosphate + 2 H(+). The protein operates within purine metabolism; GMP biosynthesis; GMP from XMP (L-Gln route): step 1/1. Its function is as follows. Catalyzes the synthesis of GMP from XMP. The chain is GMP synthase [glutamine-hydrolyzing] from Pseudoalteromonas atlantica (strain T6c / ATCC BAA-1087).